Consider the following 177-residue polypeptide: Bifunctional protein PyrR (177 aa).

The PRPP-binding motif lies at 99 to 111 (VVLVDDVLFTGRT).

The protein belongs to the purine/pyrimidine phosphoribosyltransferase family. PyrR subfamily.

It catalyses the reaction UMP + diphosphate = 5-phospho-alpha-D-ribose 1-diphosphate + uracil. Regulates the transcription of the pyrimidine nucleotide (pyr) operon in response to exogenous pyrimidines. Its function is as follows. Also displays a weak uracil phosphoribosyltransferase activity which is not physiologically significant. This Geobacter sulfurreducens (strain ATCC 51573 / DSM 12127 / PCA) protein is Bifunctional protein PyrR.